A 248-amino-acid polypeptide reads, in one-letter code: Urease accessory protein UreG 1 (248 aa).

A compositionally biased stretch (basic and acidic residues) spans 1-14; that stretch reads MLPEHHDHGHEHGG. A disordered region spans residues 1–36; the sequence is MLPEHHDHGHEHGGNGHGHGHRHQVNFDPTAAEPDP. Residue 53-60 coordinates GTP; the sequence is GPVGSGKT.

The protein belongs to the SIMIBI class G3E GTPase family. UreG subfamily. As to quaternary structure, homodimer. UreD, UreF and UreG form a complex that acts as a GTP-hydrolysis-dependent molecular chaperone, activating the urease apoprotein by helping to assemble the nickel containing metallocenter of UreC. The UreE protein probably delivers the nickel.

The protein localises to the cytoplasm. Functionally, facilitates the functional incorporation of the urease nickel metallocenter. This process requires GTP hydrolysis, probably effectuated by UreG. The polypeptide is Urease accessory protein UreG 1 (Saccharopolyspora erythraea (strain ATCC 11635 / DSM 40517 / JCM 4748 / NBRC 13426 / NCIMB 8594 / NRRL 2338)).